A 343-amino-acid polypeptide reads, in one-letter code: Anthranilate 1,2-dioxygenase electron transfer component (343 aa).

The region spanning 3-96 (HSVALNFADG…NAAFYFDHHS (94 aa)) is the 2Fe-2S ferredoxin-type domain. Residues Cys-40, Cys-45, Cys-48, and Cys-80 each contribute to the [2Fe-2S] cluster site. The ferredoxin-reductase stretch occupies residues 98 to 338 (ICNAGETLKI…HIYSEKFLQS (241 aa)). The FAD-binding FR-type domain occupies 103-206 (ETLKIATVVT…EAPLGSFYLR (104 aa)).

It belongs to the bacterial ring-hydroxylating dioxygenase ferredoxin reductase family. In terms of assembly, monomer. It is part of the anthranilate dioxygenase two component enzyme system. The other component is an oxygenase component consisting of 3 large (AntA) and 3 small (AntB) subunits. FAD serves as cofactor. Requires [2Fe-2S] cluster as cofactor.

The catalysed reaction is 2 reduced [2Fe-2S]-[ferredoxin] + NAD(+) + H(+) = 2 oxidized [2Fe-2S]-[ferredoxin] + NADH. It functions in the pathway aromatic compound metabolism; anthranilate degradation via hydroxylation; catechol from anthranilate: step 1/1. Functionally, electron transfer component of anthranilate 1,2-dioxygenase system. This chain is Anthranilate 1,2-dioxygenase electron transfer component, found in Acinetobacter baylyi (strain ATCC 33305 / BD413 / ADP1).